Reading from the N-terminus, the 345-residue chain is S-adenosylmethionine:tRNA ribosyltransferase-isomerase (345 aa).

Belongs to the QueA family. Monomer.

The protein resides in the cytoplasm. It catalyses the reaction 7-aminomethyl-7-carbaguanosine(34) in tRNA + S-adenosyl-L-methionine = epoxyqueuosine(34) in tRNA + adenine + L-methionine + 2 H(+). It functions in the pathway tRNA modification; tRNA-queuosine biosynthesis. Functionally, transfers and isomerizes the ribose moiety from AdoMet to the 7-aminomethyl group of 7-deazaguanine (preQ1-tRNA) to give epoxyqueuosine (oQ-tRNA). The protein is S-adenosylmethionine:tRNA ribosyltransferase-isomerase of Shewanella pealeana (strain ATCC 700345 / ANG-SQ1).